Reading from the N-terminus, the 288-residue chain is Fructokinase (288 aa).

T131 contacts ATP. The Zn(2+) site is built by H154, C169, H172, and C175. Residues P183 and 231–235 (GVMNQ) each bind ATP.

Belongs to the ROK (NagC/XylR) family. It depends on Mg(2+) as a cofactor.

The enzyme catalyses D-fructose + ATP = D-fructose 6-phosphate + ADP + H(+). Its activity is regulated as follows. Inhibition by zinc ions. In Pediococcus pentosaceus, this protein is Fructokinase (scrK).